We begin with the raw amino-acid sequence, 470 residues long: Zinc finger protein pat-9 (470 aa).

The interval 1-25 (MENRTPMQHHSGYEIVKSEPPSTPK) is disordered. 3 C2H2-type zinc fingers span residues 84–106 (YPCN…QNSH), 112–134 (FECD…KRIH), and 140–162 (FVCT…KDMH). Residues 191–235 (MEQEENGGLPASSSASSVISHPLITTTSGNKKRSKAAKAKQTPSS) are disordered. The Nuclear localization signal motif lies at 221–230 (KKRSKAAKAK).

Belongs to the krueppel C2H2-type zinc-finger protein family. Expressed in body wall muscle and gonad (at protein level).

The protein localises to the nucleus. It localises to the chromosome. Functionally, probable transcription factor; required for proper organization of muscle myofilaments and for their recruitment to the M line. The polypeptide is Zinc finger protein pat-9 (Caenorhabditis elegans).